The following is a 118-amino-acid chain: Large ribosomal subunit protein uL18 (118 aa).

The protein belongs to the universal ribosomal protein uL18 family. As to quaternary structure, part of the 50S ribosomal subunit; part of the 5S rRNA/L5/L18/L25 subcomplex. Contacts the 5S and 23S rRNAs.

Functionally, this is one of the proteins that bind and probably mediate the attachment of the 5S RNA into the large ribosomal subunit, where it forms part of the central protuberance. The chain is Large ribosomal subunit protein uL18 from Wolinella succinogenes (strain ATCC 29543 / DSM 1740 / CCUG 13145 / JCM 31913 / LMG 7466 / NCTC 11488 / FDC 602W) (Vibrio succinogenes).